Reading from the N-terminus, the 261-residue chain is Thioesterase TesA (261 aa).

Residues 1–24 (MLARHGPRYGGSVNGHSDDSSGDA) form a disordered region. Active-site residues include S104, D208, and H236.

It belongs to the thioesterase family.

It catalyses the reaction a fatty acyl-CoA + H2O = a fatty acid + CoA + H(+). Involved in the synthesis of both phthiocerol dimycocerosates (PDIMs) and phenolic glycolipids (PGLs), which are structurally related lipids non-covalently bound to the outer cell wall layer of M.tuberculosis and are important virulence factors. This Mycobacterium bovis (strain ATCC BAA-935 / AF2122/97) protein is Thioesterase TesA (tesA).